Consider the following 629-residue polypeptide: Ras GTPase-activating protein gap-1 (629 aa).

Residues 183 to 398 (DRIRPVLSSL…SVMASFLDNI (216 aa)) form the Ras-GAP domain. The PH domain maps to 411–507 (TVFKFGNLQQ…WLNAIERQRN (97 aa)).

The protein localises to the cytoplasm. Its function is as follows. GTPase-activating protein, which inhibits the vulval induction by acting as a negative regulator for the member of the Ras family let-60. Probably decreases the signaling activity of Ras by stimulating its intrinsic GTPase activity, thereby lowering the levels of GTP-bound, active Ras. The polypeptide is Ras GTPase-activating protein gap-1 (gap-1) (Caenorhabditis elegans).